Here is a 430-residue protein sequence, read N- to C-terminus: MSSIVAIKGFNDVLPTQTAAWRRLEQHLASLMDAYGYQQIRLPIVEQTGLFKRAIGDATDIVEKEMYTFFDKGNPPESLTLRPEGTAGCVRALVEHNLLRGATPRVWYMGPMFRYEKPQKGRYRQFHQFGVETFGVATPDIEAEVILMTARLWKRMGVAHMVQLELNTLGEKEERTEYRNALVAFLNEHKDALDEDSQRRLTTNPLRILDSKIESTQKILENAPKLYDFLKEDSLSHFQQLQDYLTAAGIKFVINQKLVRGLDYYNKTVFEWTTTALGSQGTVCGGGRYDGLVGQLKGKADQSVPAVGFGMGMERLLLLIEQVEQAEIVRDCEAFLVAEPAYQSKALVLAEQLRDQLEAANSNIRIKTGSQGSMKSQMKKADQAGAVYAIILGEREWEAQQLAVKELATAEQSQVALAELVPFLIEKFTK.

The protein belongs to the class-II aminoacyl-tRNA synthetase family. Homodimer.

Its subcellular location is the cytoplasm. It catalyses the reaction tRNA(His) + L-histidine + ATP = L-histidyl-tRNA(His) + AMP + diphosphate + H(+). The sequence is that of Histidine--tRNA ligase from Acinetobacter baumannii (strain ACICU).